A 186-amino-acid polypeptide reads, in one-letter code: Nuclear transcription factor Y subunit B-1 (186 aa).

The disordered stretch occupies residues 1 to 24 (MAGNKKRGGRNMDQVKKAAVRSDG). The DNA-binding element occupies 34–40 (LPMANLV). The interval 61–72 (THDCAVEFVGFV) is subunit association domain (SAD). The segment at 123–142 (GGNRRVAPPPPAAATPLTPG) is disordered.

This sequence belongs to the NFYB/HAP3 subunit family. Heterotrimeric transcription factor composed of three components, NF-YA, NF-YB and NF-YC. NF-YB and NF-YC must interact and dimerize for NF-YA association and DNA binding. Interacts with MADS18. Forms a ternary complex with the MADS6-MADS18 heterodimer. As to expression, expressed in developing kernels.

The protein localises to the nucleus. Functionally, component of the NF-Y/HAP transcription factor complex. The NF-Y complex stimulates the transcription of various genes by recognizing and binding to a CCAAT motif in promoters. May act through association with MADS-box proteins. May regulate the expression of genes involved in flowering. The protein is Nuclear transcription factor Y subunit B-1 (NFYB1) of Oryza sativa subsp. japonica (Rice).